The sequence spans 360 residues: 3-dehydroquinate synthase (360 aa).

NAD(+) is bound by residues 70–75 (DGEKYK), 104–108 (GVIGD), 128–129 (TT), lysine 141, and lysine 150. Zn(2+) contacts are provided by glutamate 183, histidine 246, and histidine 263.

It belongs to the sugar phosphate cyclases superfamily. Dehydroquinate synthase family. Co(2+) serves as cofactor. It depends on Zn(2+) as a cofactor. NAD(+) is required as a cofactor.

Its subcellular location is the cytoplasm. The catalysed reaction is 7-phospho-2-dehydro-3-deoxy-D-arabino-heptonate = 3-dehydroquinate + phosphate. It functions in the pathway metabolic intermediate biosynthesis; chorismate biosynthesis; chorismate from D-erythrose 4-phosphate and phosphoenolpyruvate: step 2/7. Functionally, catalyzes the conversion of 3-deoxy-D-arabino-heptulosonate 7-phosphate (DAHP) to dehydroquinate (DHQ). The polypeptide is 3-dehydroquinate synthase (Acinetobacter baumannii (strain AYE)).